The primary structure comprises 406 residues: Phosphopentomutase (406 aa).

Mn(2+) is bound by residues Asp-10, Asp-305, His-310, Asp-346, His-347, and His-358.

It belongs to the phosphopentomutase family. Mn(2+) serves as cofactor.

The protein localises to the cytoplasm. The catalysed reaction is 2-deoxy-alpha-D-ribose 1-phosphate = 2-deoxy-D-ribose 5-phosphate. It carries out the reaction alpha-D-ribose 1-phosphate = D-ribose 5-phosphate. The protein operates within carbohydrate degradation; 2-deoxy-D-ribose 1-phosphate degradation; D-glyceraldehyde 3-phosphate and acetaldehyde from 2-deoxy-alpha-D-ribose 1-phosphate: step 1/2. Functionally, isomerase that catalyzes the conversion of deoxy-ribose 1-phosphate (dRib-1-P) and ribose 1-phosphate (Rib-1-P) to deoxy-ribose 5-phosphate (dRib-5-P) and ribose 5-phosphate (Rib-5-P), respectively. In Vibrio parahaemolyticus serotype O3:K6 (strain RIMD 2210633), this protein is Phosphopentomutase.